A 119-amino-acid polypeptide reads, in one-letter code: Large ribosomal subunit protein uL18 (119 aa).

This sequence belongs to the universal ribosomal protein uL18 family. As to quaternary structure, part of the 50S ribosomal subunit; part of the 5S rRNA/L5/L18/L25 subcomplex. Contacts the 5S and 23S rRNAs.

Functionally, this is one of the proteins that bind and probably mediate the attachment of the 5S RNA into the large ribosomal subunit, where it forms part of the central protuberance. The polypeptide is Large ribosomal subunit protein uL18 (Borrelia recurrentis (strain A1)).